The chain runs to 97 residues: Large ribosomal subunit protein bL31 (97 aa).

Residues 75-97 (NKTKKSNQAKVEKQTRHRSINEL) form a disordered region. The segment covering 84–97 (KVEKQTRHRSINEL) has biased composition (basic and acidic residues).

The protein belongs to the bacterial ribosomal protein bL31 family. Type A subfamily. As to quaternary structure, part of the 50S ribosomal subunit.

In terms of biological role, binds the 23S rRNA. In Mycoplasma genitalium (strain ATCC 33530 / DSM 19775 / NCTC 10195 / G37) (Mycoplasmoides genitalium), this protein is Large ribosomal subunit protein bL31.